The following is a 914-amino-acid chain: Probable UDP-N-acetylglucosamine--peptide N-acetylglucosaminyltransferase SPINDLY (914 aa).

The segment at 1–39 (MVGLEDDTERERSPVVENGFSNGSRSSSSSAGVLSPSRK) is disordered. Positions 19-37 (GFSNGSRSSSSSAGVLSPS) are enriched in low complexity. At serine 35 the chain carries Phosphoserine. TPR repeat units follow at residues 43–76 (GNDT…DSKN), 77–110 (VEAH…DPHN), 112–144 (CALT…DASY), 152–185 (AIVL…DPHY), 186–219 (APAY…RPMY), 220–253 (AEAY…SPNF), 261–294 (AIAL…NWHY), 295–328 (ADAM…NPHC), 329–362 (AEAC…KPNF), 364–396 (QSLN…NPTY), and 397–430 (AEAF…DPDS). The catalytic region stretch occupies residues 431-914 (RNAGQNRLLA…QLSKRMDSTS (484 aa)). Positions 866–914 (PLISKDLGPSRVSVTGEATPSLKANGSAPVPSSLPTQSPQLSKRMDSTS) are disordered. Residues 877–889 (VSVTGEATPSLKA) are compositionally biased toward polar residues. A compositionally biased stretch (low complexity) spans 894–907 (PVPSSLPTQSPQLS).

The protein belongs to the glycosyltransferase 41 family. O-GlcNAc transferase subfamily. Homomultimer; via its TPR repeats. Interacts with GI. Interacts with TCP14 and TCP15. Interacts (via N-terminus) with APRR5. Interacts with CPN20. Widely expressed. Present throughout the plant (at protein level).

The protein resides in the cytoplasm. It is found in the nucleus. The enzyme catalyses L-seryl-[protein] + UDP-N-acetyl-alpha-D-glucosamine = 3-O-(N-acetyl-beta-D-glucosaminyl)-L-seryl-[protein] + UDP + H(+). It carries out the reaction L-threonyl-[protein] + UDP-N-acetyl-alpha-D-glucosamine = 3-O-(N-acetyl-beta-D-glucosaminyl)-L-threonyl-[protein] + UDP + H(+). It catalyses the reaction L-seryl-[protein] + GDP-beta-L-fucose = 3-O-(alpha-L-fucosyl)-L-seryl-[protein] + GDP + H(+). The catalysed reaction is L-threonyl-[protein] + GDP-beta-L-fucose = 3-O-(alpha-L-fucosyl)-L-threonyl-[protein] + GDP + H(+). The protein operates within protein modification; protein glycosylation. Probable O-linked N-acetylglucosamine transferase (OGT) involved in various processes such as gibberellin (GA) signaling pathway and circadian clock. OGTs catalyze the addition of nucleotide-activated sugars directly onto the polypeptide through O-glycosidic linkage with the hydroxyl of serine or threonine. Probably acts by adding O-linked sugars to yet unknown proteins. Acts as a repressor of GA signaling pathway to inhibit hypocotyl elongation. Functions with GIGANTEA (GI) in pathways controlling flowering, circadian cotyledon movements and hypocotyl elongation. Acts as a light-regulated promoter of elongation via its interaction with GI. Acts as an activator of cytokinin signaling. Required with SEC for gamete and seed development. Its OGT activity has been proved in vitro but not in vivo. Possesses O-fucosyltransferase activity on specific serine and threonine residues. Mediates O-fucosylation of the DELLA protein RGA, a repressor of the GA signaling pathway. O-fucosylation enhances RGA activity by promoting RGA binding to key transcription factors in brassinosteroid and light-signaling pathways. Regulates root hair patterning upstream of the transcription factor WER, independently of DELLA proteins and GA signaling. Involved in abscisic acid (ABA) signaling partly through functional ABAR. Mediates O-fucosylation of CPN20 that may depress ABA responses during seed germination and seedling development. Involved in the modulation of the pace of the circadian clock by mediating O-fucosylation of APRR5, one of the core circadian clock components. O-fucosylation promotes APRR5 proteolysis. The polypeptide is Probable UDP-N-acetylglucosamine--peptide N-acetylglucosaminyltransferase SPINDLY (Arabidopsis thaliana (Mouse-ear cress)).